The sequence spans 1537 residues: Leucine-rich repeat-containing protein 7 (1537 aa).

LRR repeat units follow at residues 23–44 (IISVLDYSHCSLQQVPKEVFNF), 47–68 (TLEELYLDANQIEELPKQLFNC), 70–91 (ALRKLSIPDNDLSNLPTTIASL), 93–114 (NLKELDISKNGVQEFPENIKCC), 116–137 (CLTIIEASVNPISKLPDGFTQL), 139–161 (NLTQLYLNDAFLEFLPANFGRLV), 162–183 (KLRILELRENHLKTLPKSMHKL), 185–206 (QLERLDLGNNEFGELPEVLDQI), 208–229 (NLRELWMDNNALQVLPGSIGKL), 231–253 (MLVYLDMSKNRIETVDMDISGCE), 254–275 (ALEDLLLSSNMLQQLPDSIGLL), 277–298 (KLTTLKVDDNQLTMLPNTIGNL), 300–321 (LLEEFDCSCNELESLPSTIGYL), 323–344 (SLRTLAVDENFLPELPREIGSC), 346–367 (NVTVMSLRSNKLEFLPEEIGQM), 369–391 (KLRVLNLSDNRLKNLPFSFTKLK), and 392–413 (ELAALWLSDNQSKALIPLQTEA). 3 positions are modified to phosphoserine: S439, S441, and S443. Residues 663–676 (KKESTDESEVDKTH) show a composition bias toward basic and acidic residues. Disordered stretches follow at residues 663–709 (KKES…VGSL), 730–759 (FPQPLDSKPLLSQREAVPPGNIPQRPDRLP), 786–810 (AENANSNPLLSSKSRSTSSHGRRPL), and 824–892 (EQST…SPGV). The span at 677–709 (CLNNSVSSGTYSDYSPSQASSGSSNTRVKVGSL) shows a compositional bias: polar residues. A compositionally biased stretch (low complexity) spans 790 to 804 (NSNPLLSSKSRSTSS). The residue at position 831 (T831) is a Phosphothreonine. Position 850 is a phosphoserine (S850). Positions 859 to 871 (PSKLETTPTTSPL) are enriched in low complexity. T865 is modified (phosphothreonine). Residue S869 is modified to Phosphoserine. Over residues 872–882 (PERKEHIKEST) the composition is skewed to basic and acidic residues. S947, S949, and S1118 each carry phosphoserine. Positions 1136-1159 (ELPPTDRYGRPPYRGGLDRQSSVT) are disordered. The residue at position 1149 (R1149) is an Omega-N-methylarginine. At S1233 the chain carries Phosphoserine. Disordered regions lie at residues 1234 to 1265 (DYNLGNYGDKPSDNSDLKTRPTPVKGEESCGK) and 1331 to 1360 (QKTPSQQSNILDNGQEDVSPSGQWNPYPLG). Residues 1243 to 1263 (KPSDNSDLKTRPTPVKGEESC) show a composition bias toward basic and acidic residues. Positions 1332–1354 (KTPSQQSNILDNGQEDVSPSGQW) are enriched in polar residues. Phosphoserine occurs at positions 1335 and 1439. The 91-residue stretch at 1445 to 1535 (EQFCVRIEKN…TVDLVIQREL (91 aa)) folds into the PDZ domain.

Belongs to the LAP (LRR and PDZ) protein family. In terms of assembly, interacts with CNKSR2 and DLG4. Interacts with CTNND2/Catenin delta-2. Forms a complex with N-cadherin through CTNND2. Interacts with CAMK2A. In terms of tissue distribution, brain-specific. Isoform 3 is ubiquitously expressed.

It is found in the cytoplasm. The protein localises to the postsynaptic density. Its function is as follows. Required for normal synaptic spine architecture and function. Necessary for DISC1 and GRM5 localization to postsynaptic density complexes and for both N-methyl D-aspartate receptor-dependent and metabotropic glutamate receptor-dependent long term depression. The polypeptide is Leucine-rich repeat-containing protein 7 (LRRC7) (Homo sapiens (Human)).